The primary structure comprises 172 residues: Large ribosomal subunit protein uL10 (172 aa).

It belongs to the universal ribosomal protein uL10 family. In terms of assembly, part of the ribosomal stalk of the 50S ribosomal subunit. The N-terminus interacts with L11 and the large rRNA to form the base of the stalk. The C-terminus forms an elongated spine to which L12 dimers bind in a sequential fashion forming a multimeric L10(L12)X complex.

Forms part of the ribosomal stalk, playing a central role in the interaction of the ribosome with GTP-bound translation factors. This is Large ribosomal subunit protein uL10 from Ruegeria sp. (strain TM1040) (Silicibacter sp.).